The following is a 641-amino-acid chain: 1-deoxy-D-xylulose-5-phosphate synthase (641 aa).

Residues H79 and 120–122 (AHS) each bind thiamine diphosphate. D151 serves as a coordination point for Mg(2+). Residues 152 to 153 (GA), N180, Y290, and E372 each bind thiamine diphosphate. N180 lines the Mg(2+) pocket.

The protein belongs to the transketolase family. DXPS subfamily. Homodimer. The cofactor is Mg(2+). It depends on thiamine diphosphate as a cofactor.

It carries out the reaction D-glyceraldehyde 3-phosphate + pyruvate + H(+) = 1-deoxy-D-xylulose 5-phosphate + CO2. Its pathway is metabolic intermediate biosynthesis; 1-deoxy-D-xylulose 5-phosphate biosynthesis; 1-deoxy-D-xylulose 5-phosphate from D-glyceraldehyde 3-phosphate and pyruvate: step 1/1. Functionally, catalyzes the acyloin condensation reaction between C atoms 2 and 3 of pyruvate and glyceraldehyde 3-phosphate to yield 1-deoxy-D-xylulose-5-phosphate (DXP). The polypeptide is 1-deoxy-D-xylulose-5-phosphate synthase (Bradyrhizobium sp. (strain BTAi1 / ATCC BAA-1182)).